The sequence spans 357 residues: Homoserine O-succinyltransferase (357 aa).

Residue Cys-146 is the Acyl-thioester intermediate of the active site. Residues Lys-167 and Ser-196 each coordinate substrate. His-239 serves as the catalytic Proton acceptor. The active site involves Glu-241. Arg-253 is a substrate binding site.

Belongs to the MetA family.

It localises to the cytoplasm. The catalysed reaction is L-homoserine + succinyl-CoA = O-succinyl-L-homoserine + CoA. Its pathway is amino-acid biosynthesis; L-methionine biosynthesis via de novo pathway; O-succinyl-L-homoserine from L-homoserine: step 1/1. Functionally, transfers a succinyl group from succinyl-CoA to L-homoserine, forming succinyl-L-homoserine. The sequence is that of Homoserine O-succinyltransferase from Allochromatium vinosum (strain ATCC 17899 / DSM 180 / NBRC 103801 / NCIMB 10441 / D) (Chromatium vinosum).